We begin with the raw amino-acid sequence, 1230 residues long: Ubiquitin carboxyl-terminal hydrolase 15 (1230 aa).

The 141-residue stretch at glutamate 39–valine 179 folds into the MATH domain. A USP domain is found at valine 205–glutamine 536. Cysteine 214 serves as the catalytic Nucleophile. Histidine 465 acts as the Proton acceptor in catalysis.

The protein belongs to the peptidase C19 family. As to quaternary structure, interacts with PEX6; promoting association with the PEX1-PEX6 ATPase complex.

Its subcellular location is the cytoplasm. The protein resides in the cytosol. It is found in the peroxisome. It catalyses the reaction Thiol-dependent hydrolysis of ester, thioester, amide, peptide and isopeptide bonds formed by the C-terminal Gly of ubiquitin (a 76-residue protein attached to proteins as an intracellular targeting signal).. Functionally, deubiquitinase involved in peroxisome import by mediating deubiquitination of the peroxisomal import receptor PEX5. Catalyzes deubiquitination of both monoubiquitiated and polyubiquitinated forms of PEX5 following its retrotranslocation into the cytosol, resetting PEX5 for a subsequent import cycle. This Saccharomyces cerevisiae (strain ATCC 204508 / S288c) (Baker's yeast) protein is Ubiquitin carboxyl-terminal hydrolase 15.